The following is a 457-amino-acid chain: Histidine--tRNA ligase (457 aa).

It belongs to the class-II aminoacyl-tRNA synthetase family. Homodimer.

It is found in the cytoplasm. The enzyme catalyses tRNA(His) + L-histidine + ATP = L-histidyl-tRNA(His) + AMP + diphosphate + H(+). The protein is Histidine--tRNA ligase of Mesoplasma florum (strain ATCC 33453 / NBRC 100688 / NCTC 11704 / L1) (Acholeplasma florum).